The following is a 664-amino-acid chain: UvrABC system protein B (664 aa).

The Helicase ATP-binding domain maps to 23–180 (EGLNRGMRFQ…EKLAKIGYQR (158 aa)). 36 to 43 (GVTGSGKT) provides a ligand contact to ATP. Residues 89–112 (YYDYYQPEAYIPTKDLYIEKNADI) carry the Beta-hairpin motif. Residues 426 to 588 (QVDDLINEIV…ITPRSIVKPL (163 aa)) enclose the Helicase C-terminal domain. One can recognise a UVR domain in the interval 622–657 (EEYVALLEEEMYRAASELRYEDAAALRDELFRVKET).

It belongs to the UvrB family. As to quaternary structure, forms a heterotetramer with UvrA during the search for lesions. Interacts with UvrC in an incision complex.

Its subcellular location is the cytoplasm. The UvrABC repair system catalyzes the recognition and processing of DNA lesions. A damage recognition complex composed of 2 UvrA and 2 UvrB subunits scans DNA for abnormalities. Upon binding of the UvrA(2)B(2) complex to a putative damaged site, the DNA wraps around one UvrB monomer. DNA wrap is dependent on ATP binding by UvrB and probably causes local melting of the DNA helix, facilitating insertion of UvrB beta-hairpin between the DNA strands. Then UvrB probes one DNA strand for the presence of a lesion. If a lesion is found the UvrA subunits dissociate and the UvrB-DNA preincision complex is formed. This complex is subsequently bound by UvrC and the second UvrB is released. If no lesion is found, the DNA wraps around the other UvrB subunit that will check the other stand for damage. This Thermotoga neapolitana (strain ATCC 49049 / DSM 4359 / NBRC 107923 / NS-E) protein is UvrABC system protein B.